The chain runs to 641 residues: MLLHCNVSYYTSTFSFISSSLRRQDNADDSQDTVIRRRHNARSISLYIRHNRDLKLNKNPNESQETFVPPPPPPRRDLDGENRSKLLELSLVTRRTPQFPGSIYAQSASDADIASSLPSLRNFLGSDGDDDGESEREMIVKALEIRRKVTKEIIKESLVRKGRFGITYATNVTDRLGDFVDHVMIQAAALKRLPEFSESRFNLRARTVIEDSNFVPLVRWLKHHELSYNRIAKIICMSKGNLDSIRIMIEWLKSIHVKGEFIAVAFLRSGDNILQRNREELNEIVEYLESNGVRRDWMGYVVGRCPELLSFSMEEVKSRVDFFLKMGMNQNDFGTMVYDYPKIIGFFSFQVMEKKINYLKEFGLSTEEVGRLLAYKPHLMGCSIEERWKPLVKYFYYLGIPKEGMKRILVVKPILYCIDLEKTIAPKVRFLQEMGIPNEAIGNMLVKFPSLLTNSLYKKIRPVVIFLLTRAGVTQKDIGKVIAMDPALLGCSIGTKLEPNMRYYISLGIRFYQLGEMIADFPMLLRYNVDNLRPKYRYLRRTMIRPLQDLIEFPRFFSYSLERRIIPRHTIMVENRVNFKLRYMLACTDEEFERRVRDKVERRERFEAGLDSEDSQPSDENISDQEIAFSDEAEEEEDLTE.

Disordered regions lie at residues 54–80 (LKLNKNPNESQETFVPPPPPPRRDLDG) and 606–641 (FEAGLDSEDSQPSDENISDQEIAFSDEAEEEEDLTE). Over residues 610 to 641 (LDSEDSQPSDENISDQEIAFSDEAEEEEDLTE) the composition is skewed to acidic residues.

The protein belongs to the mTERF family.

Its subcellular location is the plastid. The protein resides in the chloroplast. Functionally, transcription termination factor involved in processing of plastid transcripts. Essential for embryogenesis. The sequence is that of Transcription termination factor MTERF2, chloroplastic from Arabidopsis thaliana (Mouse-ear cress).